Consider the following 757-residue polypeptide: E3 ubiquitin-protein ligase RNF12-B (757 aa).

Residues 1-10 show a composition bias toward polar residues; sequence MESADSTGKG. Disordered stretches follow at residues 1–29, 68–519, and 619–652; these read MESA…LDRE, LQQI…TYES, and EPAE…GGVT. The span at 11–21 shows a compositional bias: low complexity; the sequence is STEQSESQRQS. 2 stretches are compositionally biased toward polar residues: residues 110–138 and 147–163; these read SVRQ…NPNS and INVN…SLDQ. 21 tandem repeats follow at residues 197–202, 203–208, 209–214, 215–220, 221–226, 227–232, 237–242, 243–248, 249–254, 255–260, 261–266, 267–272, 273–278, 279–284, 285–290, 291–296, 297–302, 303–308, 309–314, 315–320, and 321–326. The 21 X 6 AA approximate repeats of P-[EV]-S-V-[PA]-[EV] stretch occupies residues 197–326; that stretch reads PESVDEPVSV…SVPVPESVPV (130 aa). The span at 202–237 shows a compositional bias: low complexity; sequence EPVSVAEPVSVAEPVSVAEPESVAEPESVAASVPVP. The segment covering 245-313 has biased composition (acidic residues); sequence SVPEPESVPE…ESVPEPESIA (69 aa). Positions 314 to 327 are enriched in low complexity; sequence EPESVPVPESVPVA. Residues 352-367 are compositionally biased toward basic and acidic residues; the sequence is RSPDQRRTRARTDRSR. Over residues 383 to 392 the composition is skewed to polar residues; it reads HSSSQTVDAS. The span at 408-424 shows a compositional bias: low complexity; it reads SSQVHSSSSNETEGSSR. Positions 428–452 are enriched in polar residues; sequence HITARQQALGTEGQSQSTVHLSNPE. The span at 453–466 shows a compositional bias: low complexity; it reads SRSSSQTPQTDSPS. Residues 467–476 are compositionally biased toward polar residues; it reads NAETTGTGQR. A compositionally biased stretch (basic and acidic residues) spans 490–500; that stretch reads RPGDYRQRDSI. Residues 501–517 are compositionally biased toward polar residues; the sequence is ANRTRSRSQTPNNTVTY. The RING-type; atypical zinc-finger motif lies at 703–744; it reads CSVCITEYTEGNKLRKLPCSHEYHIHCIDRWLSENSTCPICR. The PDZ-binding motif lies at 754–757; that stretch reads ESIV.

Belongs to the RNF12 family. As to quaternary structure, forms homodimers through the C-terminal region. The N-terminus interacts with the homeobox of LIM/homeobox factor lhx1/lim1, with lhx3/lim3 and lhx5/lim5, and with the N-terminus of ldb1. Shows overlapping expression with lhx1/lim1 and ldb1 in the gastrula mesoderm, and expression overlaps with ldb1 throughout early embryogenesis. After gastrulation, expression is gradually restricted to tissues originated from the ectoderm, the neuroectoderm, neural crest and epidermis, and subsequently to the neural tube as well as the head and tailbud region.

The protein resides in the nucleus. The catalysed reaction is S-ubiquitinyl-[E2 ubiquitin-conjugating enzyme]-L-cysteine + [acceptor protein]-L-lysine = [E2 ubiquitin-conjugating enzyme]-L-cysteine + N(6)-ubiquitinyl-[acceptor protein]-L-lysine.. It functions in the pathway protein modification; protein ubiquitination. Functionally, acts as an E3 ubiquitin-protein ligase specific for ldb1, mediating ubiquitination and proteasome-dependent degradation of excess ldb1 in a RING-dependent manner. Does not degrade ldb1 bound to lhx1/lim1, nor lim1 itself and thus contributes to the establishment of proper ldb1-lhx1/lim1 stoichiometry and the formation of a ldb1-lhx1/lim1 complex. Interferes with Spemann organizer function and suppresses secondary axis formation induced by ldb1 and lhx1/lim1. The sequence is that of E3 ubiquitin-protein ligase RNF12-B (rnf12-b) from Xenopus laevis (African clawed frog).